Reading from the N-terminus, the 428-residue chain is Tyrosine--tRNA ligase (428 aa).

Tyrosine 41 lines the L-tyrosine pocket. Positions 46-55 (PTADSLHLGH) match the 'HIGH' region motif. 2 residues coordinate L-tyrosine: tyrosine 179 and glutamine 183. The 'KMSKS' region signature appears at 239–243 (KFGKT). Lysine 242 lines the ATP pocket. Positions 361–418 (ADLMQALVDSELQPSRGQARKTIASNAVTINGEKQSDPEYFFQDSDILFGRYTLLRRG) constitute an S4 RNA-binding domain.

This sequence belongs to the class-I aminoacyl-tRNA synthetase family. TyrS type 1 subfamily. In terms of assembly, homodimer.

Its subcellular location is the cytoplasm. The enzyme catalyses tRNA(Tyr) + L-tyrosine + ATP = L-tyrosyl-tRNA(Tyr) + AMP + diphosphate + H(+). In terms of biological role, catalyzes the attachment of tyrosine to tRNA(Tyr) in a two-step reaction: tyrosine is first activated by ATP to form Tyr-AMP and then transferred to the acceptor end of tRNA(Tyr). This Citrobacter koseri (strain ATCC BAA-895 / CDC 4225-83 / SGSC4696) protein is Tyrosine--tRNA ligase.